A 695-amino-acid polypeptide reads, in one-letter code: ATP-dependent permease MDL1, mitochondrial (695 aa).

The transit peptide at 1 to 100 (MIVRMIRLCK…RLFVLSKPES (100 aa)) directs the protein to the mitochondrion. Helical transmembrane passes span 103–123 (IGLA…VPSV), 156–176 (FTAL…RIII), 242–262 (FVGF…MMIL), 337–357 (GLFF…LLLV), and 372–392 (LSSF…LSSF). The 296-residue stretch at 103–398 (IGLALLLILI…LSSFYSELMK (296 aa)) folds into the ABC transmembrane type-1 domain. The ABC transporter domain maps to 432 to 673 (IVFKNVSFTY…PNSELNALLA (242 aa)). 467 to 474 (GPSGSGKS) is a binding site for ATP.

It belongs to the ABC transporter superfamily. ABCB family. Mitochondrial peptide exporter (TC 3.A.1.212) subfamily.

It is found in the mitochondrion inner membrane. Mediates export of peptides with molecular masses of 2100 to 600 daltons generated upon proteolysis of mitochondrial inner membrane proteins. This Saccharomyces cerevisiae (strain ATCC 204508 / S288c) (Baker's yeast) protein is ATP-dependent permease MDL1, mitochondrial (MDL1).